The primary structure comprises 359 residues: E3 ubiquitin-protein ligase RNF146 (359 aa).

An RING-type zinc finger spans residues 36–74 (CAICLQTCVHPVSLPCKHVFCYLCVKGASWLGKRCALCR). Residues Lys-84 and Lys-94 each participate in a glycyl lysine isopeptide (Lys-Gly) (interchain with G-Cter in ubiquitin) cross-link. One can recognise a WWE domain in the interval 91–167 (EELKAASRGN…EHGRRRKIKR (77 aa)). Residues Tyr-107, Arg-110, and Trp-114 each coordinate a glycoprotein. A Glycyl lysine isopeptide (Lys-Gly) (interchain with G-Cter in ubiquitin) cross-link involves residue Lys-130. Tyr-144, Gln-153, Arg-163, and Lys-175 together coordinate a glycoprotein. Lys-175 participates in a covalent cross-link: Glycyl lysine isopeptide (Lys-Gly) (interchain with G-Cter in ubiquitin). A disordered region spans residues 259–359 (ERSHRGEGEE…PDGQCTVTEV (101 aa)). Acidic residues predominate over residues 284 to 298 (SVEETESDASSDSED). Phosphoserine occurs at positions 290 and 294. Residues 306–322 (HSLTQQRLLVPNANQTV) show a composition bias toward polar residues.

As to quaternary structure, can form homooligomers. Interacts with PARsylated AXIN1, AXIN2, BLZF1, CASC3, H1-2, IPO7, LIG3, NCL, PARP1, XRCC1, XRCC5 and XRCC6. Interacts with DDB1, DHX15, IQGAP1, LRPPRC, PARP2, PRKDC, RUVBL2, TNKS1 and TNKS2. Binding often leads to interactor ubiquitination, in the presence of the appropriate E1 and E2 enzymes, and proteasomal degradation. Post-translationally, ubiquitinated; autoubiquitinated. Autoubiquitination is enhanced upon poly(ADP-ribose)-binding.

It is found in the cytoplasm. The protein localises to the cytosol. Its subcellular location is the nucleus. The enzyme catalyses S-ubiquitinyl-[E2 ubiquitin-conjugating enzyme]-L-cysteine + [acceptor protein]-L-lysine = [E2 ubiquitin-conjugating enzyme]-L-cysteine + N(6)-ubiquitinyl-[acceptor protein]-L-lysine.. It functions in the pathway protein modification; protein ubiquitination. Its function is as follows. E3 ubiquitin-protein ligase that specifically binds poly-ADP-ribosylated (PARsylated) proteins and mediates their ubiquitination and subsequent degradation. May regulate many important biological processes, such as cell survival and DNA damage response. Acts as an activator of the Wnt signaling pathway by mediating the ubiquitination of PARsylated AXIN1 and AXIN2, 2 key components of the beta-catenin destruction complex. Acts in cooperation with tankyrase proteins (TNKS and TNKS2), which mediate PARsylation of target proteins AXIN1, AXIN2, BLZF1, CASC3, TNKS and TNKS2. Recognizes and binds tankyrase-dependent PARsylated proteins via its WWE domain and mediates their ubiquitination, leading to their degradation. Different ubiquitin linkage types have been observed: TNKS2 undergoes ubiquitination at 'Lys-48' and 'Lys-63', while AXIN1 is only ubiquitinated at 'Lys-48'. May regulate TNKS and TNKS2 subcellular location, preventing aggregation at a centrosomal location. Neuroprotective protein. Protects the brain against N-methyl-D-aspartate (NMDA) receptor-mediated glutamate excitotoxicity and ischemia, by interfering with PAR-induced cell death, called parthanatos. Prevents nuclear translocation of AIFM1 in a PAR-binding dependent manner. Does not affect PARP1 activation. Protects against cell death induced by DNA damaging agents, such as N-methyl-N-nitro-N-nitrosoguanidine (MNNG) and rescues cells from G1 arrest. Promotes cell survival after gamma-irradiation. Facilitates DNA repair. The polypeptide is E3 ubiquitin-protein ligase RNF146 (RNF146) (Ailuropoda melanoleuca (Giant panda)).